The sequence spans 104 residues: Small ribosomal subunit protein uS10 (104 aa).

The protein belongs to the universal ribosomal protein uS10 family. As to quaternary structure, part of the 30S ribosomal subunit.

In terms of biological role, involved in the binding of tRNA to the ribosomes. In Helicobacter pylori (strain P12), this protein is Small ribosomal subunit protein uS10.